The chain runs to 791 residues: DUF1769 family protein duc1 (791 aa).

Positions 158–189 (ADSQESDTESLPEINDSSDVSLSDLPSTNVTP) are disordered. Residues 174-184 (SSDVSLSDLPS) are compositionally biased toward low complexity. The FFAT signature appears at 373-379 (RYFTALE). Tyrosine 374 is subject to Phosphotyrosine. Phosphothreonine is present on threonine 376. Disordered stretches follow at residues 381–505 (QQDQ…SNRR), 542–606 (NVAG…VDGK), and 630–658 (PKPV…NLDP). The segment covering 415–426 (LIKRMSLRSKKS) has biased composition (basic residues). A compositionally biased stretch (low complexity) spans 444–453 (STASAASTSA). Residues 455-473 (KTEKEKKMSAPRRSLDKLI) show a composition bias toward basic and acidic residues. Serine 477 and serine 493 each carry phosphoserine. The span at 477–487 (SLHRHHHHHHK) shows a compositional bias: basic residues. Positions 555–564 (EQTSITSGVP) are enriched in polar residues. Serine 574 bears the Phosphoserine mark. Basic and acidic residues predominate over residues 574–586 (STPEKIVEERSID). Polar residues predominate over residues 587–601 (EVSQSNTPSSKQLPQ).

The protein belongs to the UPF0590 family. In terms of assembly, interacts (via FFAT-motif) with scs2 (via MSP domain); the interaction is direct and serves to restrict the localization of duc1 to areas of cell membrane-endoplasmic reticulum contact sites, and away from the cell division site.

It is found in the cell membrane. Functionally, promotes the proper distribution of phosphatidylinositol 4,5-bisphosphate (PtdIns(4,5)P2/PIP2) synthesis at the cell membrane. May bind phosphatidylinositol 4,5-bisphosphate (PtdIns(4,5)P2/PIP2) and is required for robust anchoring of the contractile ring to the cell membrane. The protein is DUF1769 family protein duc1 of Schizosaccharomyces pombe (strain 972 / ATCC 24843) (Fission yeast).